Here is a 363-residue protein sequence, read N- to C-terminus: NAD(P)H-quinone oxidoreductase subunit 1, chloroplastic (363 aa).

A run of 7 helical transmembrane segments spans residues 28–48 (WVLA…LVIV), 98–118 (FSIG…VIPF), 129–149 (IGIF…LMSG), 253–273 (FGLF…FVTV), 274–294 (LYLG…LVEI), 300–320 (IFGT…FLFI), and 336–356 (LLNL…LLTT).

Belongs to the complex I subunit 1 family. As to quaternary structure, NDH is composed of at least 16 different subunits, 5 of which are encoded in the nucleus.

It is found in the plastid. It localises to the chloroplast thylakoid membrane. It catalyses the reaction a plastoquinone + NADH + (n+1) H(+)(in) = a plastoquinol + NAD(+) + n H(+)(out). It carries out the reaction a plastoquinone + NADPH + (n+1) H(+)(in) = a plastoquinol + NADP(+) + n H(+)(out). Its function is as follows. NDH shuttles electrons from NAD(P)H:plastoquinone, via FMN and iron-sulfur (Fe-S) centers, to quinones in the photosynthetic chain and possibly in a chloroplast respiratory chain. The immediate electron acceptor for the enzyme in this species is believed to be plastoquinone. Couples the redox reaction to proton translocation, and thus conserves the redox energy in a proton gradient. The chain is NAD(P)H-quinone oxidoreductase subunit 1, chloroplastic from Citrus sinensis (Sweet orange).